Consider the following 312-residue polypeptide: Glyoxylate/hydroxypyruvate reductase A (312 aa).

Residue arginine 227 is part of the active site. The Proton donor role is filled by histidine 275.

This sequence belongs to the D-isomer specific 2-hydroxyacid dehydrogenase family. GhrA subfamily.

It localises to the cytoplasm. The catalysed reaction is glycolate + NADP(+) = glyoxylate + NADPH + H(+). It catalyses the reaction (R)-glycerate + NAD(+) = 3-hydroxypyruvate + NADH + H(+). It carries out the reaction (R)-glycerate + NADP(+) = 3-hydroxypyruvate + NADPH + H(+). Catalyzes the NADPH-dependent reduction of glyoxylate and hydroxypyruvate into glycolate and glycerate, respectively. The polypeptide is Glyoxylate/hydroxypyruvate reductase A (Escherichia coli O157:H7).